We begin with the raw amino-acid sequence, 560 residues long: 2-isopropylmalate synthase (560 aa).

The region spanning 30–303 is the Pyruvate carboxyltransferase domain; the sequence is PVWCSVDLRD…DPEIDCSNIE (274 aa). Aspartate 39, histidine 242, histidine 244, and asparagine 278 together coordinate Mg(2+). The regulatory domain stretch occupies residues 437–560; it reads QPEGRLRFVD…RVLDVKAGKA (124 aa).

This sequence belongs to the alpha-IPM synthase/homocitrate synthase family. LeuA type 2 subfamily. Homodimer. Mg(2+) serves as cofactor.

The protein resides in the cytoplasm. It catalyses the reaction 3-methyl-2-oxobutanoate + acetyl-CoA + H2O = (2S)-2-isopropylmalate + CoA + H(+). Its pathway is amino-acid biosynthesis; L-leucine biosynthesis; L-leucine from 3-methyl-2-oxobutanoate: step 1/4. In terms of biological role, catalyzes the condensation of the acetyl group of acetyl-CoA with 3-methyl-2-oxobutanoate (2-ketoisovalerate) to form 3-carboxy-3-hydroxy-4-methylpentanoate (2-isopropylmalate). This Rhizobium johnstonii (strain DSM 114642 / LMG 32736 / 3841) (Rhizobium leguminosarum bv. viciae) protein is 2-isopropylmalate synthase.